The chain runs to 617 residues: Probable Xaa-Pro aminopeptidase P (617 aa).

Mn(2+)-binding residues include D414, D425, E523, and E537.

This sequence belongs to the peptidase M24B family. Mn(2+) serves as cofactor.

It carries out the reaction Release of any N-terminal amino acid, including proline, that is linked to proline, even from a dipeptide or tripeptide.. Its function is as follows. Catalyzes the removal of a penultimate prolyl residue from the N-termini of peptides. This chain is Probable Xaa-Pro aminopeptidase P (AMPP), found in Colletotrichum graminicola (strain M1.001 / M2 / FGSC 10212) (Maize anthracnose fungus).